We begin with the raw amino-acid sequence, 197 residues long: Pyridoxal 5'-phosphate synthase subunit PdxT (197 aa).

An L-glutamine-binding site is contributed by 52–54 (GES). The Nucleophile role is filled by Cys-84. L-glutamine-binding positions include Arg-116 and 143–144 (IR). Active-site charge relay system residues include His-179 and Glu-181.

The protein belongs to the glutaminase PdxT/SNO family. In terms of assembly, in the presence of PdxS, forms a dodecamer of heterodimers. Only shows activity in the heterodimer.

The enzyme catalyses aldehydo-D-ribose 5-phosphate + D-glyceraldehyde 3-phosphate + L-glutamine = pyridoxal 5'-phosphate + L-glutamate + phosphate + 3 H2O + H(+). It catalyses the reaction L-glutamine + H2O = L-glutamate + NH4(+). It functions in the pathway cofactor biosynthesis; pyridoxal 5'-phosphate biosynthesis. Its function is as follows. Catalyzes the hydrolysis of glutamine to glutamate and ammonia as part of the biosynthesis of pyridoxal 5'-phosphate. The resulting ammonia molecule is channeled to the active site of PdxS. This is Pyridoxal 5'-phosphate synthase subunit PdxT from Ignicoccus hospitalis (strain KIN4/I / DSM 18386 / JCM 14125).